Reading from the N-terminus, the 372-residue chain is DNA double-strand break repair protein Mre11 (372 aa).

The Mn(2+) site is built by D8, H10, D49, and N84. Catalysis depends on H85, which acts as the Proton donor. The Mn(2+) site is built by H161, H190, and H192.

The protein belongs to the MRE11/RAD32 family. As to quaternary structure, homodimer. Forms a heterotetramer composed of two Mre11 subunits and two Rad50 subunits. The cofactor is Mn(2+).

Nuclease activity is regulated by Rad50. Functionally, part of the Rad50/Mre11 complex, which is involved in the early steps of DNA double-strand break (DSB) repair. The complex may facilitate opening of the processed DNA ends to aid in the recruitment of HerA and NurA. Mre11 binds to DSB ends and has both double-stranded 3'-5' exonuclease activity and single-stranded endonuclease activity. This is DNA double-strand break repair protein Mre11 from Methanococcus maripaludis (strain DSM 14266 / JCM 13030 / NBRC 101832 / S2 / LL).